Reading from the N-terminus, the 407-residue chain is Schlafen-like protein 1 (407 aa).

2 disordered regions span residues 1 to 28 (MTPM…LPEL) and 137 to 191 (AQGP…CQGR). A compositionally biased stretch (low complexity) spans 155 to 167 (GLSPGPSPGSGVP). Positions 181-190 (QAQQLQSCQG) are enriched in polar residues. Position 261–268 (261–268 (GVEDSGLV)) interacts with ATP. Residues 366–398 (RQRWLVELGKLEEKMKALMMEKEQLQQQLQQHG) are a coiled coil.

The protein belongs to the Schlafen family. Subgroup I subfamily.

The protein is Schlafen-like protein 1 (SLFNL1) of Homo sapiens (Human).